Reading from the N-terminus, the 424-residue chain is Dihydroorotase (424 aa).

Histidine 61 and histidine 63 together coordinate Zn(2+). Substrate is bound by residues 63–65 (HLR) and asparagine 95. Zn(2+)-binding residues include aspartate 153, histidine 180, and histidine 233. Residue asparagine 279 coordinates substrate. Aspartate 306 is a Zn(2+) binding site. The active site involves aspartate 306. Residue histidine 310 participates in substrate binding.

It belongs to the metallo-dependent hydrolases superfamily. DHOase family. Class I DHOase subfamily. The cofactor is Zn(2+).

The catalysed reaction is (S)-dihydroorotate + H2O = N-carbamoyl-L-aspartate + H(+). It functions in the pathway pyrimidine metabolism; UMP biosynthesis via de novo pathway; (S)-dihydroorotate from bicarbonate: step 3/3. Its function is as follows. Catalyzes the reversible cyclization of carbamoyl aspartate to dihydroorotate. The polypeptide is Dihydroorotase (Pelobacter propionicus (strain DSM 2379 / NBRC 103807 / OttBd1)).